A 565-amino-acid chain; its full sequence is Salicyl-AMP ligase / salicyl-S-ArCP synthetase (565 aa).

ATP is bound by residues glycine 214, glycine 330, valine 352, aspartate 436, arginine 451, and lysine 542.

It belongs to the ATP-dependent AMP-binding enzyme family.

It carries out the reaction salicylate + ATP + H(+) = 2-hydroxybenzoyl-5'-AMP + diphosphate. The catalysed reaction is 2-hydroxybenzoyl-5'-AMP + holo-[ACP] = salicyl-[ACP] + AMP + H(+). Its pathway is siderophore biosynthesis; mycobactin biosynthesis. Inhibited by salicyl-AMS, an acyl-AMP analog. Also inhibited by 5'-O-[(N-acyl)sulfamoyl]adenosines. Functionally, involved in the initial steps of the mycobactin biosynthetic pathway. Catalyzes the salicylation of the aryl carrier protein (ArCP) domain of MbtB through a two-step reaction. The first step is the ATP-dependent adenylation of salicylate to generate a salicyl-AMP intermediate. The second step is the transfer of this activated salicylate to MbtB to form a salicyl-ArCP domain thioester. The sequence is that of Salicyl-AMP ligase / salicyl-S-ArCP synthetase from Mycobacterium tuberculosis (strain ATCC 25618 / H37Rv).